Consider the following 206-residue polypeptide: Pyrrolidone-carboxylate peptidase (206 aa).

Catalysis depends on residues Glu-78, Cys-141, and His-165.

It belongs to the peptidase C15 family. In terms of assembly, homotetramer.

The protein localises to the cytoplasm. It catalyses the reaction Release of an N-terminal pyroglutamyl group from a polypeptide, the second amino acid generally not being Pro.. In terms of biological role, removes 5-oxoproline from various penultimate amino acid residues except L-proline. This chain is Pyrrolidone-carboxylate peptidase, found in Thermococcus kodakarensis (strain ATCC BAA-918 / JCM 12380 / KOD1) (Pyrococcus kodakaraensis (strain KOD1)).